The chain runs to 78 residues: MPIKKGSLVRAVRDKLDNSLEALANDTRWPSYLFETDGEVLDMRGDYALIKFGAVPTPPVWLRQDQLAESGAAAESTS.

This sequence belongs to the complex I NdhO subunit family. As to quaternary structure, NDH-1 can be composed of about 15 different subunits; different subcomplexes with different compositions have been identified which probably have different functions.

The protein resides in the cell inner membrane. It catalyses the reaction a plastoquinone + NADH + (n+1) H(+)(in) = a plastoquinol + NAD(+) + n H(+)(out). The catalysed reaction is a plastoquinone + NADPH + (n+1) H(+)(in) = a plastoquinol + NADP(+) + n H(+)(out). Functionally, NDH-1 shuttles electrons from an unknown electron donor, via FMN and iron-sulfur (Fe-S) centers, to quinones in the respiratory and/or the photosynthetic chain. The immediate electron acceptor for the enzyme in this species is believed to be plastoquinone. Couples the redox reaction to proton translocation, and thus conserves the redox energy in a proton gradient. Cyanobacterial NDH-1 also plays a role in inorganic carbon-concentration. This Gloeobacter violaceus (strain ATCC 29082 / PCC 7421) protein is NAD(P)H-quinone oxidoreductase subunit O.